The sequence spans 410 residues: Histidine--tRNA ligase (410 aa).

The protein belongs to the class-II aminoacyl-tRNA synthetase family.

It localises to the cytoplasm. The catalysed reaction is tRNA(His) + L-histidine + ATP = L-histidyl-tRNA(His) + AMP + diphosphate + H(+). This Methanoregula boonei (strain DSM 21154 / JCM 14090 / 6A8) protein is Histidine--tRNA ligase.